Reading from the N-terminus, the 583-residue chain is Orphan steroid hormone receptor 2 (583 aa).

The nuclear receptor DNA-binding region spans 84-159; it reads IELCAVCGDK…MGMKSDSVQC (76 aa). 2 NR C4-type zinc fingers span residues 87 to 107 and 123 to 142; these read CAVC…CEGC and CRGN…CQYC. Residues 248 to 563 form the NR LBD domain; the sequence is TLASVVTSLA…SIIPYILRME (316 aa).

It belongs to the nuclear hormone receptor family. NR2 subfamily. In terms of assembly, binds DNA as a monomer. In terms of tissue distribution, expressed uniformly in the early embryo. In contrast, larval expression is localized to the epaulettes and mouth epithelium. Expressed in multiple adult organs including lantern muscle, tubefeet, intestine, coelomocytes and gonads. In the adult ovaries and testes, expression is specifically localized to the smooth muscle epithelial layer of cells which surround the ovarioles and acini, respectively (at protein level).

It localises to the cytoplasm. It is found in the nucleus. In terms of biological role, orphan nuclear receptor. Binds to the hormone response element in the upstream promoter region of the CYIIIB gene in vitro. Both isoform 1 and isoform 2 bind DNA. This is Orphan steroid hormone receptor 2 from Strongylocentrotus purpuratus (Purple sea urchin).